Consider the following 502-residue polypeptide: Probable cytosol aminopeptidase (502 aa).

Mn(2+) contacts are provided by Lys269 and Asp274. Lys281 is an active-site residue. Positions 292, 351, and 353 each coordinate Mn(2+). Arg355 is an active-site residue.

Belongs to the peptidase M17 family. Mn(2+) serves as cofactor.

Its subcellular location is the cytoplasm. The enzyme catalyses Release of an N-terminal amino acid, Xaa-|-Yaa-, in which Xaa is preferably Leu, but may be other amino acids including Pro although not Arg or Lys, and Yaa may be Pro. Amino acid amides and methyl esters are also readily hydrolyzed, but rates on arylamides are exceedingly low.. It carries out the reaction Release of an N-terminal amino acid, preferentially leucine, but not glutamic or aspartic acids.. Presumably involved in the processing and regular turnover of intracellular proteins. Catalyzes the removal of unsubstituted N-terminal amino acids from various peptides. The sequence is that of Probable cytosol aminopeptidase from Shewanella sediminis (strain HAW-EB3).